The chain runs to 226 residues: V-type proton ATPase subunit E 1 (226 aa).

Ala-2 carries the N-acetylalanine modification. Position 56 is a phosphotyrosine (Tyr-56).

It belongs to the V-ATPase E subunit family. As to quaternary structure, V-ATPase is a heteromultimeric enzyme made up of two complexes: the ATP-hydrolytic V1 complex and the proton translocation V0 complex. The V1 complex consists of three catalytic AB heterodimers that form a heterohexamer, three peripheral stalks each consisting of EG heterodimers, one central rotor including subunits D and F, and the regulatory subunits C and H. The proton translocation complex V0 consists of the proton transport subunit a, a ring of proteolipid subunits c9c'', rotary subunit d, subunits e and f, and the accessory subunits ATP6AP1/Ac45 and ATP6AP2/PRR. Interacts with RABL2/RABL2A; binds preferentially to GTP-bound RABL2. Interacts with ALDOC. Interacts with RAB11B. Expressed in brain (at protein level).

The protein resides in the apical cell membrane. It is found in the cytoplasmic vesicle. Its subcellular location is the secretory vesicle. The protein localises to the synaptic vesicle membrane. It localises to the clathrin-coated vesicle membrane. In terms of biological role, subunit of the V1 complex of vacuolar(H+)-ATPase (V-ATPase), a multisubunit enzyme composed of a peripheral complex (V1) that hydrolyzes ATP and a membrane integral complex (V0) that translocates protons. V-ATPase is responsible for acidifying and maintaining the pH of intracellular compartments and in some cell types, is targeted to the plasma membrane, where it is responsible for acidifying the extracellular environment. The chain is V-type proton ATPase subunit E 1 (Atp6v1e1) from Rattus norvegicus (Rat).